A 100-amino-acid polypeptide reads, in one-letter code: uncharacterized protein (100 aa).

A run of 2 helical transmembrane segments spans residues 17 to 37 and 78 to 98; these read IIIL…SVSF and MVDK…TIPF.

The protein localises to the endoplasmic reticulum membrane. This is an uncharacterized protein from Saccharomyces cerevisiae (strain ATCC 204508 / S288c) (Baker's yeast).